A 314-amino-acid chain; its full sequence is Homoserine kinase (314 aa).

Residue 95 to 105 (PHSRGLGSSAS) coordinates ATP.

Belongs to the GHMP kinase family. Homoserine kinase subfamily.

The protein resides in the cytoplasm. It carries out the reaction L-homoserine + ATP = O-phospho-L-homoserine + ADP + H(+). The protein operates within amino-acid biosynthesis; L-threonine biosynthesis; L-threonine from L-aspartate: step 4/5. Functionally, catalyzes the ATP-dependent phosphorylation of L-homoserine to L-homoserine phosphate. The sequence is that of Homoserine kinase from Rhodococcus opacus (strain B4).